The sequence spans 171 residues: UPF0312 protein SE_0264 (171 aa).

It belongs to the UPF0312 family.

The chain is UPF0312 protein SE_0264 from Staphylococcus epidermidis (strain ATCC 12228 / FDA PCI 1200).